The sequence spans 82 residues: Delta-actitoxin-Aeq2a (82 aa).

The signal sequence occupies residues 1–19; it reads MNRLMILVFAAVFLALASA. The propeptide occupies 20 to 26; that stretch reads DEDVDIA. 3 disulfide bridges follow: Cys-32/Cys-79, Cys-34/Cys-69, and Cys-62/Cys-80.

Belongs to the sea anemone sodium channel inhibitory toxin family. Type I subfamily.

Its subcellular location is the secreted. It is found in the nematocyst. In terms of biological role, binds specifically to voltage-gated sodium channels (Nav), thereby delaying their inactivation during signal transduction. Causes death to crabs (minimum lethal dose of 25 ug/kg) and mice. This is Delta-actitoxin-Aeq2a from Actinia equina (Beadlet anemone).